Consider the following 161-residue polypeptide: Vasotocin-neurophysin VT (161 aa).

The first 19 residues, 1–19 (MAEPSLPLSFLCLLALSSA), serve as a signal peptide directing secretion. Cys-20 and Cys-25 are disulfide-bonded. Gly-28 carries the glycine amide modification. Cystine bridges form between Cys-41-Cys-85, Cys-44-Cys-58, Cys-52-Cys-75, Cys-59-Cys-65, Cys-92-Cys-104, Cys-98-Cys-116, and Cys-105-Cys-110.

It belongs to the vasopressin/oxytocin family. Seven disulfide bonds are present in neurophysin.

The protein resides in the secreted. Functionally, vasotocin is an antidiuretic hormone. This Gallus gallus (Chicken) protein is Vasotocin-neurophysin VT.